Consider the following 156-residue polypeptide: Ribosomal RNA large subunit methyltransferase H (156 aa).

S-adenosyl-L-methionine-binding positions include leucine 72, glycine 104, and 123–128; that span reads FGKMVW.

It belongs to the RNA methyltransferase RlmH family. In terms of assembly, homodimer.

The protein localises to the cytoplasm. It catalyses the reaction pseudouridine(1915) in 23S rRNA + S-adenosyl-L-methionine = N(3)-methylpseudouridine(1915) in 23S rRNA + S-adenosyl-L-homocysteine + H(+). Specifically methylates the pseudouridine at position 1915 (m3Psi1915) in 23S rRNA. The sequence is that of Ribosomal RNA large subunit methyltransferase H from Ruegeria sp. (strain TM1040) (Silicibacter sp.).